Reading from the N-terminus, the 207-residue chain is Thiamine-phosphate synthase (207 aa).

Residues 38 to 42 (QYRNK) and Asn70 each bind 4-amino-2-methyl-5-(diphosphooxymethyl)pyrimidine. Mg(2+) is bound by residues Asp71 and Asp90. Residue Ser109 coordinates 4-amino-2-methyl-5-(diphosphooxymethyl)pyrimidine. A 2-[(2R,5Z)-2-carboxy-4-methylthiazol-5(2H)-ylidene]ethyl phosphate-binding site is contributed by 136–138 (TAT). Lys139 provides a ligand contact to 4-amino-2-methyl-5-(diphosphooxymethyl)pyrimidine. Residues Gly165 and 185-186 (VS) contribute to the 2-[(2R,5Z)-2-carboxy-4-methylthiazol-5(2H)-ylidene]ethyl phosphate site.

This sequence belongs to the thiamine-phosphate synthase family. Mg(2+) serves as cofactor.

It carries out the reaction 2-[(2R,5Z)-2-carboxy-4-methylthiazol-5(2H)-ylidene]ethyl phosphate + 4-amino-2-methyl-5-(diphosphooxymethyl)pyrimidine + 2 H(+) = thiamine phosphate + CO2 + diphosphate. The enzyme catalyses 2-(2-carboxy-4-methylthiazol-5-yl)ethyl phosphate + 4-amino-2-methyl-5-(diphosphooxymethyl)pyrimidine + 2 H(+) = thiamine phosphate + CO2 + diphosphate. It catalyses the reaction 4-methyl-5-(2-phosphooxyethyl)-thiazole + 4-amino-2-methyl-5-(diphosphooxymethyl)pyrimidine + H(+) = thiamine phosphate + diphosphate. It functions in the pathway cofactor biosynthesis; thiamine diphosphate biosynthesis; thiamine phosphate from 4-amino-2-methyl-5-diphosphomethylpyrimidine and 4-methyl-5-(2-phosphoethyl)-thiazole: step 1/1. In terms of biological role, condenses 4-methyl-5-(beta-hydroxyethyl)thiazole monophosphate (THZ-P) and 2-methyl-4-amino-5-hydroxymethyl pyrimidine pyrophosphate (HMP-PP) to form thiamine monophosphate (TMP). The protein is Thiamine-phosphate synthase of Xanthomonas campestris pv. campestris (strain 8004).